The chain runs to 152 residues: Deoxyuridine 5'-triphosphate nucleotidohydrolase (152 aa).

Residues arginine 71–glycine 73, asparagine 84, leucine 88–aspartate 90, and methionine 98 each bind substrate.

It belongs to the dUTPase family. Mg(2+) serves as cofactor.

The catalysed reaction is dUTP + H2O = dUMP + diphosphate + H(+). Its pathway is pyrimidine metabolism; dUMP biosynthesis; dUMP from dCTP (dUTP route): step 2/2. This enzyme is involved in nucleotide metabolism: it produces dUMP, the immediate precursor of thymidine nucleotides and it decreases the intracellular concentration of dUTP so that uracil cannot be incorporated into DNA. This chain is Deoxyuridine 5'-triphosphate nucleotidohydrolase, found in Salmonella agona (strain SL483).